The primary structure comprises 520 residues: Leucine aminopeptidase 1 (520 aa).

Lys-288 and Asp-293 together coordinate Mn(2+). Residue Lys-300 is part of the active site. The Mn(2+) site is built by Asp-313, Asp-373, and Glu-375. Residue Arg-377 is part of the active site.

This sequence belongs to the peptidase M17 family. Homohexamer (dimer of homotrimers). It depends on Mn(2+) as a cofactor.

It is found in the cytoplasm. The catalysed reaction is Release of an N-terminal amino acid, Xaa-|-Yaa-, in which Xaa is preferably Leu, but may be other amino acids including Pro although not Arg or Lys, and Yaa may be Pro. Amino acid amides and methyl esters are also readily hydrolyzed, but rates on arylamides are exceedingly low.. The enzyme catalyses Release of N-terminal proline from a peptide.. Functionally, presumably involved in the processing and regular turnover of intracellular proteins. Catalyzes the removal of unsubstituted N-terminal amino acids from various peptides. Possesses leucine aminopeptidase activity against the model substrate leucine-amido methyl coumarin. Possesses Cys-Gly dipeptidase activity. In addition, can cleave Cys-Leu and Leu-Cys dipeptides. Functions as a molecular chaperone to protect proteins from heat-induced damage. This is Leucine aminopeptidase 1 from Arabidopsis thaliana (Mouse-ear cress).